The chain runs to 216 residues: MSSLDLFHYEKPTLLEFDSMVRCQGYASLAGVDEAGRGPLAGPVVAAAVILPAGIGLSEVDDSKKLTSGKRDELFEVIMANALAVGVGLSDAGVIDRINILQATLAAMKEALSLLFIKPDYVLVDGISKIPVTIPQKTIKKGDGTSLSIAAASIVAKVHRDRLMVSYDAEFPQYGFAAHKGYGCVDHLKAIAEYGPCPIHRMTFSGVKEHVKNCEG.

The region spanning 27–216 is the RNase H type-2 domain; the sequence is ASLAGVDEAG…VKEHVKNCEG (190 aa). A divalent metal cation-binding residues include aspartate 33, glutamate 34, and aspartate 125.

Belongs to the RNase HII family. It depends on Mn(2+) as a cofactor. Mg(2+) serves as cofactor.

It localises to the cytoplasm. It catalyses the reaction Endonucleolytic cleavage to 5'-phosphomonoester.. Its function is as follows. Endonuclease that specifically degrades the RNA of RNA-DNA hybrids. The sequence is that of Ribonuclease HII from Geotalea daltonii (strain DSM 22248 / JCM 15807 / FRC-32) (Geobacter daltonii).